The chain runs to 210 residues: Thiamine-phosphate synthase (210 aa).

4-amino-2-methyl-5-(diphosphooxymethyl)pyrimidine contacts are provided by residues 39-43 (QLREK) and Asn-71. Positions 72 and 91 each coordinate Mg(2+). Ser-110 is a binding site for 4-amino-2-methyl-5-(diphosphooxymethyl)pyrimidine. 134–136 (TPT) is a binding site for 2-[(2R,5Z)-2-carboxy-4-methylthiazol-5(2H)-ylidene]ethyl phosphate. Residue Lys-137 coordinates 4-amino-2-methyl-5-(diphosphooxymethyl)pyrimidine. Gly-163 contributes to the 2-[(2R,5Z)-2-carboxy-4-methylthiazol-5(2H)-ylidene]ethyl phosphate binding site.

This sequence belongs to the thiamine-phosphate synthase family. Mg(2+) serves as cofactor.

The catalysed reaction is 2-[(2R,5Z)-2-carboxy-4-methylthiazol-5(2H)-ylidene]ethyl phosphate + 4-amino-2-methyl-5-(diphosphooxymethyl)pyrimidine + 2 H(+) = thiamine phosphate + CO2 + diphosphate. It carries out the reaction 2-(2-carboxy-4-methylthiazol-5-yl)ethyl phosphate + 4-amino-2-methyl-5-(diphosphooxymethyl)pyrimidine + 2 H(+) = thiamine phosphate + CO2 + diphosphate. It catalyses the reaction 4-methyl-5-(2-phosphooxyethyl)-thiazole + 4-amino-2-methyl-5-(diphosphooxymethyl)pyrimidine + H(+) = thiamine phosphate + diphosphate. Its pathway is cofactor biosynthesis; thiamine diphosphate biosynthesis; thiamine phosphate from 4-amino-2-methyl-5-diphosphomethylpyrimidine and 4-methyl-5-(2-phosphoethyl)-thiazole: step 1/1. Functionally, condenses 4-methyl-5-(beta-hydroxyethyl)thiazole monophosphate (THZ-P) and 2-methyl-4-amino-5-hydroxymethyl pyrimidine pyrophosphate (HMP-PP) to form thiamine monophosphate (TMP). This is Thiamine-phosphate synthase from Campylobacter jejuni subsp. jejuni serotype O:2 (strain ATCC 700819 / NCTC 11168).